A 397-amino-acid chain; its full sequence is CCA-adding enzyme (397 aa).

Residues G8 and R11 each contribute to the ATP site. CTP-binding residues include G8 and R11. E21 and D23 together coordinate Mg(2+). 3 residues coordinate ATP: R91, R137, and R140. CTP contacts are provided by R91, R137, and R140. The region spanning 213 to 324 (NLDAAIATLK…LALFNGCDAW (112 aa)) is the HD domain.

Belongs to the tRNA nucleotidyltransferase/poly(A) polymerase family. Bacterial CCA-adding enzyme type 2 subfamily. Requires Mg(2+) as cofactor.

It carries out the reaction a tRNA precursor + 2 CTP + ATP = a tRNA with a 3' CCA end + 3 diphosphate. The catalysed reaction is a tRNA with a 3' CCA end + 2 CTP + ATP = a tRNA with a 3' CCACCA end + 3 diphosphate. Its function is as follows. Catalyzes the addition and repair of the essential 3'-terminal CCA sequence in tRNAs without using a nucleic acid template. Adds these three nucleotides in the order of C, C, and A to the tRNA nucleotide-73, using CTP and ATP as substrates and producing inorganic pyrophosphate. tRNA 3'-terminal CCA addition is required both for tRNA processing and repair. Also involved in tRNA surveillance by mediating tandem CCA addition to generate a CCACCA at the 3' terminus of unstable tRNAs. While stable tRNAs receive only 3'-terminal CCA, unstable tRNAs are marked with CCACCA and rapidly degraded. The polypeptide is CCA-adding enzyme (Alteromonas mediterranea (strain DSM 17117 / CIP 110805 / LMG 28347 / Deep ecotype)).